The sequence spans 204 residues: UPF0637 protein SAR1080 (204 aa).

It belongs to the UPF0637 family.

In Staphylococcus aureus (strain MRSA252), this protein is UPF0637 protein SAR1080.